We begin with the raw amino-acid sequence, 266 residues long: GTP cyclohydrolase III (266 aa).

This sequence belongs to the archaeal-type GTP cyclohydrolase family.

It catalyses the reaction GTP + 3 H2O = 2-amino-5-formylamino-6-(5-phospho-D-ribosylamino)pyrimidin-4(3H)-one + 2 phosphate + 2 H(+). In terms of biological role, catalyzes the formation of 2-amino-5-formylamino-6-ribofuranosylamino-4(3H)-pyrimidinone ribonucleotide monophosphate and inorganic phosphate from GTP. Also has an independent pyrophosphate phosphohydrolase activity. The protein is GTP cyclohydrolase III of Methanococcus maripaludis (strain DSM 14266 / JCM 13030 / NBRC 101832 / S2 / LL).